Consider the following 113-residue polypeptide: UPF0482 protein YnfB (113 aa).

An N-terminal signal peptide occupies residues 1–28; that stretch reads MNILSGKLPFLLGAVFAGSVVLATSVQA.

It belongs to the UPF0482 family.

This chain is UPF0482 protein YnfB, found in Escherichia fergusonii (strain ATCC 35469 / DSM 13698 / CCUG 18766 / IAM 14443 / JCM 21226 / LMG 7866 / NBRC 102419 / NCTC 12128 / CDC 0568-73).